The sequence spans 509 residues: 4-aminobutyrate aminotransferase (509 aa).

Gly166–Ser167 contacts pyridoxal 5'-phosphate. Arg223 serves as a coordination point for substrate. Position 363 is an N6-(pyridoxal phosphate)lysine (Lys363). Residue Thr387 coordinates pyridoxal 5'-phosphate.

This sequence belongs to the class-III pyridoxal-phosphate-dependent aminotransferase family. Homodimer. The cofactor is pyridoxal 5'-phosphate.

The protein resides in the cytoplasm. The catalysed reaction is 4-aminobutanoate + 2-oxoglutarate = succinate semialdehyde + L-glutamate. Deaminates gamma-aminobutyric acid (GABA) to succinate-semialdehyde, which in turn is converted to succinate by the succinate semialdehyde dehydrogenase. Not required for the utilization of GABA as nitrogen source. The polypeptide is 4-aminobutyrate aminotransferase (GATA) (Mycosarcoma maydis (Corn smut fungus)).